The primary structure comprises 178 residues: Caveolin-1 (178 aa).

An N-acetylserine modification is found at S2. S2 is modified (phosphoserine). Positions 2–94 (SGGKYVDSEG…WKASFTTFTV (93 aa)) are required for homooligomerization. At 2 to 104 (SGGKYVDSEG…TKYWFYRLLS (103 aa)) the chain is on the cytoplasmic side. At K5 the chain carries N6-acetyllysine; alternate. K5 participates in a covalent cross-link: Glycyl lysine isopeptide (Lys-Gly) (interchain with G-Cter in ubiquitin); alternate. At Y6 the chain carries Phosphotyrosine. At S9 the chain carries Phosphoserine. Position 14 is a phosphotyrosine; by ABL1 (Y14). Y25 carries the post-translational modification Phosphotyrosine. Glycyl lysine isopeptide (Lys-Gly) (interchain with G-Cter in ubiquitin) cross-links involve residues K26, K30, K39, K47, and K57. The interval 82–94 (DGIWKASFTTFTV) is interaction with CAVIN3. Residues 105 to 125 (ALFGIPMALIWGIYFAILSFL) constitute an intramembrane region (helical). Residues 126 to 178 (HIWAVVPCIKSFLIEIQCVSRVYSIYVHTFCDPFFEAVGKIFSSIRINMQKEI) are Cytoplasmic-facing. The tract at residues 131-142 (VPCIKSFLIEIQ) is interacts with SPRY1, SPRY2, SPRY3 and SPRY4. S-palmitoyl cysteine attachment occurs at residues C133, C143, and C156. Positions 149–160 (SIYVHTFCDPFF) are interacts with SPRY1, SPRY2, and SPRY4. The segment at 167 to 178 (FSSIRINMQKEI) is interacts with SPRY1, SPRY2, SPRY3 and SPRY4.

Belongs to the caveolin family. As to quaternary structure, homooligomer. Interacts with GLIPR2. Interacts with NOSTRIN. Interacts with SNAP25 and STX1A. Interacts (via the N-terminus) with DPP4; the interaction is direct. Interacts with CTNNB1, CDH1 and JUP. Interacts with PACSIN2; this interaction induces membrane tubulation. Interacts with SLC7A9. Interacts with BMX and BTK. Interacts with TGFBR1. Interacts with CAVIN3 (via leucine-zipper domain) in a cholesterol-sensitive manner. Interacts with CAVIN1. Interacts with EHD2 in a cholesterol-dependent manner. Forms a ternary complex with UBXN6 and VCP; mediates CAV1 targeting to lysosomes for degradation. Interacts with ABCG1; this interaction regulates ABCG1-mediated cholesterol efflux. Interacts with NEU3; this interaction enhances NEU3 sialidase activity within caveola. Interacts (via C-terminus) with SPRY1, SPRY2 (via C-terminus), SPRY3, and SPRY4. Interacts with IGFBP5; this interaction allows trafficking of IGFBP5 from the plasma membrane to the nucleus. Post-translationally, phosphorylated at Tyr-14 by ABL1 in response to oxidative stress. In terms of processing, ubiquitinated. Undergo monoubiquitination and multi- and/or polyubiquitination. Monoubiquitination of N-terminal lysines promotes integration in a ternary complex with UBXN6 and VCP which promotes oligomeric CAV1 targeting to lysosomes for degradation. Ubiquitinated by ZNRF1; leading to degradation and modulation of the TLR4-mediated immune response.

It localises to the golgi apparatus membrane. The protein resides in the cell membrane. The protein localises to the membrane. Its subcellular location is the caveola. It is found in the membrane raft. May act as a scaffolding protein within caveolar membranes. Forms a stable heterooligomeric complex with CAV2 that targets to lipid rafts and drives caveolae formation. Mediates the recruitment of CAVIN proteins (CAVIN1/2/3/4) to the caveolae. Interacts directly with G-protein alpha subunits and can functionally regulate their activity. Involved in the costimulatory signal essential for T-cell receptor (TCR)-mediated T-cell activation. Its binding to DPP4 induces T-cell proliferation and NF-kappa-B activation in a T-cell receptor/CD3-dependent manner. Recruits CTNNB1 to caveolar membranes and may regulate CTNNB1-mediated signaling through the Wnt pathway. Negatively regulates TGFB1-mediated activation of SMAD2/3 by mediating the internalization of TGFBR1 from membrane rafts leading to its subsequent degradation. Binds 20(S)-hydroxycholesterol (20(S)-OHC). The chain is Caveolin-1 (CAV1) from Mustela putorius furo (European domestic ferret).